The primary structure comprises 275 residues: Lectin (275 aa).

The signal sequence occupies residues 1-30; that stretch reads MASLQTQMISFYLIFLSILLTTIFFFKVNS. D-glucose contacts are provided by Asp-111 and Gly-129. Residues Glu-149 and Asp-151 each coordinate Mn(2+). Ca(2+) contacts are provided by Asp-151, Phe-153, Asn-155, and Asp-159. The Mn(2+) site is built by Asp-159 and His-166. Residues 211–217 constitute a propeptide that is removed on maturation; the sequence is NSLEEEN. D-glucose is bound by residues Gly-246 and Ala-247. Residues 270-275 constitute a propeptide that is removed on maturation; the sequence is KQAADA.

It belongs to the leguminous lectin family. In terms of assembly, heterotetramer of two alpha and two beta chains. In terms of processing, the mature form consists of two chains, alpha and beta, produced by cleavage of the immature protein. These remain cleaved, yet fold together to form one subunit.

D-mannose specific lectin. This chain is Lectin, found in Lens culinaris subsp. culinaris (Cultivated lentil).